Here is a 183-residue protein sequence, read N- to C-terminus: RNA 2',3'-cyclic phosphodiesterase (183 aa).

The Proton donor role is filled by H44. 2 consecutive short sequence motifs (HXTX) follow at residues 44–47 (HITL) and 130–133 (HMTL). H130 functions as the Proton acceptor in the catalytic mechanism.

The protein belongs to the 2H phosphoesterase superfamily. ThpR family.

The catalysed reaction is a 3'-end 2',3'-cyclophospho-ribonucleotide-RNA + H2O = a 3'-end 2'-phospho-ribonucleotide-RNA + H(+). Functionally, hydrolyzes RNA 2',3'-cyclic phosphodiester to an RNA 2'-phosphomonoester. The protein is RNA 2',3'-cyclic phosphodiesterase (ytlP) of Bacillus subtilis (strain 168).